An 84-amino-acid polypeptide reads, in one-letter code: Small ribosomal subunit protein uS17 (84 aa).

This sequence belongs to the universal ribosomal protein uS17 family. Part of the 30S ribosomal subunit.

In terms of biological role, one of the primary rRNA binding proteins, it binds specifically to the 5'-end of 16S ribosomal RNA. This Serratia proteamaculans (strain 568) protein is Small ribosomal subunit protein uS17.